Reading from the N-terminus, the 551-residue chain is Solute carrier family 22 member 4 (551 aa).

The Cytoplasmic segment spans residues 1 to 20 (MRDYDEAIAFLGEWGPFQRL). Residues 21 to 41 (IFFLLSASIIPNGFNGMSVVF) traverse the membrane as a helical segment. The Extracellular portion of the chain corresponds to 42-141 (LAGTPEHRCR…WNLVCEDNWK (100 aa)). N-linked (GlcNAc...) asparagine glycans are attached at residues asparagine 57, asparagine 64, and asparagine 91. Residues 142 to 162 (VPLTTSLFFVGVLLGSFVSGQ) traverse the membrane as a helical segment. The Cytoplasmic portion of the chain corresponds to 163 to 171 (LSDRFGRKN). The helical transmembrane segment at 172-192 (VLFATMAVQTGFSFLQIFSIS) threads the bilayer. At 193–197 (WEMFT) the chain is on the extracellular side. The chain crosses the membrane as a helical span at residues 198–218 (VLFLIVGMGQISNYVVAFILG). 218–225 (GTEILGKS) lines the ATP pocket. Over 219-232 (TEILGKSVRIIFST) the chain is Cytoplasmic. A helical transmembrane segment spans residues 233–253 (LGVCTFFAVGYMLLPLFAYFI). Residues 254–257 (RDWR) lie on the Extracellular side of the membrane. A helical membrane pass occupies residues 258-278 (MLLLALTVPGVLCVPLWWFIP). The Cytoplasmic segment spans residues 279 to 337 (ESPRWLISQRRFREAEDIIQKAAKMNNIAVPAVIFDSVEELNPLKQQKAFILDLFRTWN). A helical transmembrane segment spans residues 338–358 (IAIMTIMSLLLWMLTSVGYFA). Topologically, residues 359-371 (LSLDTPNLHGDAY) are extracellular. A helical transmembrane segment spans residues 372–392 (LNCFLSALIEIPAYITAWLLL). The Cytoplasmic segment spans residues 393–399 (RTLPRRY). A helical membrane pass occupies residues 400–420 (IIAAVLFWGGGVLLFIQLVPV). Residues 421–426 (DYYFLS) are Extracellular-facing. A helical transmembrane segment spans residues 427–447 (IGLVMLGKFGITSAFSMLYVF). The Cytoplasmic segment spans residues 448–460 (TAELYPTMVRNMA). Residues 461–481 (VGVTSMASRVGSIIAPYFVYL) traverse the membrane as a helical segment. The Extracellular portion of the chain corresponds to 482 to 486 (GAYNR). Residues 487 to 507 (MLPYIVMGSLTVLIGILTLFF) traverse the membrane as a helical segment. The Cytoplasmic portion of the chain corresponds to 508–551 (PESLGMTLPETLEQMQKVKWFRSGKKTRDSMETEENPKVLITAF).

The protein belongs to the major facilitator (TC 2.A.1) superfamily. Organic cation transporter (TC 2.A.1.19) family. In terms of assembly, interacts with PDZK1.

Its subcellular location is the apical cell membrane. The protein localises to the basal cell membrane. It localises to the mitochondrion membrane. The catalysed reaction is ergothioneine(out) + Na(+)(out) = ergothioneine(in) + Na(+)(in). It catalyses the reaction acetylcholine(in) = acetylcholine(out). It carries out the reaction (R)-carnitine(out) + Na(+)(out) = (R)-carnitine(in) + Na(+)(in). The enzyme catalyses glycine betaine(out) + Na(+)(out) = glycine betaine(in) + Na(+)(in). Its activity is regulated as follows. Allosterically activated by intracellular ATP. Its function is as follows. Transporter that mediates the transport of endogenous and microbial zwitterions and organic cations. Functions as a Na(+)-dependent and pH-dependent high affinity microbial symporter of potent food-derived antioxidant ergothioeine. Transports one sodium ion with one ergothioeine molecule. Involved in the absorption of ergothioneine from the luminal/apical side of the small intestine and renal tubular cells, and into non-parenchymal liver cells, thereby contributing to maintain steady-state ergothioneine level in the body. Also mediates the bidirectional transport of acetycholine, although the exact transport mechanism has not been fully identified yet. Most likely exports anti-inflammatory acetylcholine in non-neuronal tissues, thereby contributing to the non-neuronal cholinergic system. Displays a general physiological role linked to better survival by controlling inflammation and oxidative stress, which may be related to ergothioneine and acetycholine transports. May also function as a low-affinity Na(+)-dependent transporter of L-carnitine through the mitochondrial membrane, thereby maintaining intracellular carnitine homeostasis. May contribute to regulate the transport of cationic compounds in testis across the blood-testis-barrier. In Papio anubis (Olive baboon), this protein is Solute carrier family 22 member 4 (SLC22A4).